The chain runs to 765 residues: Transcription factor RFX3 (765 aa).

A DNA-binding region (RFX-type winged-helix) is located at residues 189 to 264; that stretch reads HLQWLLDNYE…YHYYGIRVKP (76 aa).

Belongs to the RFX family.

The protein localises to the nucleus. Transcription factor required for ciliogenesis and islet cell differentiation during endocrine pancreas development. The polypeptide is Transcription factor RFX3 (rfx3) (Danio rerio (Zebrafish)).